The primary structure comprises 739 residues: Exocyst complex component 3-like protein (739 aa).

2 disordered regions span residues 1 to 21 (MDSKIQPTLRPGSSCPRPEWP) and 698 to 718 (AALSSLQAGPPPSPSTGRRAL). The interval 1–370 (MDSKIQPTLR…DVSQLEPLLT (370 aa)) is mediates interaction with EXOC2, EXOC4 and EXOC5.

The protein belongs to the SEC6 family. In terms of assembly, interacts with EXOC2, EXOC4 and EXOC5; may be part of the exocyst. In terms of tissue distribution, ubiquitously expressed.

The protein resides in the cytoplasmic vesicle. It is found in the secretory vesicle. Functionally, as part of the exocyst, may play a role in regulated exocytosis of insulin granules. This chain is Exocyst complex component 3-like protein (Exoc3l1), found in Mus musculus (Mouse).